We begin with the raw amino-acid sequence, 274 residues long: MSTYFISDIHGCYEEFRILLEKSSFNDKKDYLWIAGDLVSRGPDSLEVVKYLYSLKDRVQIVLGNHDINLIAVHAGIKDNKKENYFDEFLSSPDSVELINWLRCQSFLKVDEKRKIIMSHAGISPQWDINIAKVCALEIEDRLSHKNYALFLKEIYHNNIDFWRLDLNQLDRLRYSMNSFTRMRYCYPDGRLNMFCKKSPDFVKYPLRPWFLMPSSISKVYSIFFGHWSSLKGTHVPKPFFPLDAGCCWGEELVMLRWEDGKWFSQAYLSKKCI.

The protein belongs to the Ap4A hydrolase family.

It catalyses the reaction P(1),P(4)-bis(5'-adenosyl) tetraphosphate + H2O = 2 ADP + 2 H(+). Its function is as follows. Hydrolyzes diadenosine 5',5'''-P1,P4-tetraphosphate to yield ADP. The polypeptide is Bis(5'-nucleosyl)-tetraphosphatase, symmetrical (Buchnera aphidicola subsp. Acyrthosiphon pisum (strain Tuc7)).